A 621-amino-acid chain; its full sequence is Phosphatidylinositol-3,5-bisphosphate 3-phosphatase MTMR6 (621 aa).

The GRAM domain occupies 1–101 (MEHIRTTKVE…YNSLLQLSKQ (101 aa)). Residues 2-141 (EHIRTTKVEQ…EEYKRMGVPN (140 aa)) form an interaction with RAB1B region. At Tyr108 the chain carries Phosphotyrosine. One can recognise a Myotubularin phosphatase domain in the interval 124–499 (GWQLIDLAEE…FNFKFWRNMY (376 aa)). 3 residues coordinate a 1,2-diacyl-sn-glycero-3-phospho-(1D-myo-inositol-3,5-bisphosphate): Asn248, Asn273, and Ile274. 3 residues coordinate a 1,2-diacyl-sn-glycero-3-phospho-(1D-myo-inositol-3-phosphate): Asn248, Asn273, and Ile274. Catalysis depends on Cys336, which acts as the Phosphocysteine intermediate. A 1,2-diacyl-sn-glycero-3-phospho-(1D-myo-inositol-3,5-bisphosphate)-binding residues include Ser337, Asp338, Gly339, Trp340, Asp341, Arg342, Lys378, and Arg382. The a 1,2-diacyl-sn-glycero-3-phospho-(1D-myo-inositol-3-phosphate) site is built by Ser337, Asp338, Gly339, Trp340, Asp341, and Arg342. Residue Arg382 participates in a 1,2-diacyl-sn-glycero-3-phospho-(1D-myo-inositol-3-phosphate) binding. Ser556, Ser561, Ser589, and Ser611 each carry phosphoserine.

Belongs to the protein-tyrosine phosphatase family. Non-receptor class myotubularin subfamily. As to quaternary structure, homodimer. Heterodimer (via C-terminus) with MTMR9 (via C-terminus). Interacts with ALKBH4. Interacts with KCNN4. Interacts (via GRAM domain) with RAB1B (in GDP-bound form); the interaction regulates MTMR6 recruitment to the endoplasmic reticulum-Golgi intermediate compartment. Expressed in CD4+ T-cells.

The protein localises to the cytoplasm. It is found in the endoplasmic reticulum-Golgi intermediate compartment. It localises to the endoplasmic reticulum. Its subcellular location is the cell projection. The protein resides in the ruffle membrane. The protein localises to the perinuclear region. It catalyses the reaction a 1,2-diacyl-sn-glycero-3-phospho-(1D-myo-inositol-3,5-bisphosphate) + H2O = a 1,2-diacyl-sn-glycero-3-phospho-(1D-myo-inositol-5-phosphate) + phosphate. The catalysed reaction is a 1,2-diacyl-sn-glycero-3-phospho-(1D-myo-inositol-3-phosphate) + H2O = a 1,2-diacyl-sn-glycero-3-phospho-(1D-myo-inositol) + phosphate. It carries out the reaction 1,2-dioctanoyl-sn-glycero-3-phospho-(1D-myo-inositol-3,5-bisphosphate) + H2O = 1,2-dioctanoyl-sn-glycero-3-phospho-(1D-myo-inositol-5-phosphate) + phosphate. The enzyme catalyses 1,2-dioctanoyl-sn-glycero-3-phospho-(1-D-myo-inositol-3-phosphate) + H2O = 1,2-dioctanoyl-sn-glycero-3-phospho-(1D-myo-inositol) + phosphate. Allosterically activated by phosphatidylserine and/or phosphatidylinositol 4-phosphate (PtdIns(4)P), and phosphatidylinositol 5-phosphate (PtdIns(5)P). Interaction with MTMR9 increases catalytic activity towards phosphatidylinositol 3,5-bisphosphate. In terms of biological role, lipid phosphatase that specifically dephosphorylates the D-3 position of phosphatidylinositol 3-phosphate and phosphatidylinositol 3,5-bisphosphate, generating phosphatidylinositol and phosphatidylinositol 5-phosphate. Binds with high affinity to phosphatidylinositol 3,5-bisphosphate (PtdIns(3,5)P2) but also to phosphatidylinositol 3-phosphate (PtdIns(3)P), phosphatidylinositol 4-phosphate (PtdIns(4)P), and phosphatidylinositol 5-phosphate (PtdIns(5)P), phosphatidic acid and phosphatidylserine. Negatively regulates ER-Golgi protein transport. Probably in association with MTMR9, plays a role in the late stages of macropinocytosis by dephosphorylating phosphatidylinositol 3-phosphate in membrane ruffles. Acts as a negative regulator of KCNN4/KCa3.1 channel activity in CD4(+) T-cells possibly by decreasing intracellular levels of phosphatidylinositol 3-phosphate. Negatively regulates proliferation of reactivated CD4(+) T-cells. In complex with MTMR9, negatively regulates DNA damage-induced apoptosis. The formation of the MTMR6-MTMR9 complex stabilizes both MTMR6 and MTMR9 protein levels. The chain is Phosphatidylinositol-3,5-bisphosphate 3-phosphatase MTMR6 from Homo sapiens (Human).